The chain runs to 693 residues: Tegument protein UL47 (693 aa).

Disordered stretches follow at residues 1–32 (MSAREPAGRRRRASTRPRASPVADEPAGDGVG) and 48–126 (ELEA…GYLG). Over residues 48–57 (ELEALEEMAG) the composition is skewed to acidic residues. An RNA-binding region spans residues 50–75 (EALEEMAGDEPPVRRRREGPRARRRR). A Nuclear localization signal motif is present at residues 63 to 75 (RRRREGPRARRRR). Residues 63-75 (RRRREGPRARRRR) show a composition bias toward basic residues. Positions 647-670 (SVLGPRVRVVDIMSQFRKLLMGDE) match the Nuclear export signal motif.

The protein belongs to the alphaherpesvirinae HHV-1 UL47 family. As to quaternary structure, interacts with US3 kinase. Interacts with UL31 and UL34; these interactions seem important for efficient virion nuclear egress. Interacts with UL41/VHS. In terms of processing, phosphorylated by US3. This phosphorylation is required for proper nuclear localization.

The protein localises to the virion tegument. It localises to the host nucleus. Its subcellular location is the host cytoplasm. Tegument protein that can bind to various RNA transcripts. Plays a role in the attenuation of selective viral and cellular mRNA degradation by modulating the activity of host shutoff RNase UL41/VHS. Also plays a role in the primary envelopment of virions in the perinuclear space, probably by interacting with two nuclear egress proteins UL31 and UL34. In Homo sapiens (Human), this protein is Tegument protein UL47.